The following is a 372-amino-acid chain: tRNA-specific 2-thiouridylase MnmA (372 aa).

ATP contacts are provided by residues 11–18 (GMSGGVDS) and M37. The segment at 97-99 (NPD) is interaction with target base in tRNA. C102 (nucleophile) is an active-site residue. C102 and C199 form a disulfide bridge. G126 provides a ligand contact to ATP. The tract at residues 149 to 151 (KDQ) is interaction with tRNA. C199 serves as the catalytic Cysteine persulfide intermediate. The segment at 309-310 (RY) is interaction with tRNA.

This sequence belongs to the MnmA/TRMU family.

It localises to the cytoplasm. It catalyses the reaction S-sulfanyl-L-cysteinyl-[protein] + uridine(34) in tRNA + AH2 + ATP = 2-thiouridine(34) in tRNA + L-cysteinyl-[protein] + A + AMP + diphosphate + H(+). In terms of biological role, catalyzes the 2-thiolation of uridine at the wobble position (U34) of tRNA, leading to the formation of s(2)U34. This Staphylococcus aureus (strain bovine RF122 / ET3-1) protein is tRNA-specific 2-thiouridylase MnmA.